A 61-amino-acid chain; its full sequence is Protein translocase subunit SecE (61 aa).

A helical transmembrane segment spans residues 38–58; it reads GIGMILIGLIGLVIRMIGYLI.

Belongs to the SecE/SEC61-gamma family. As to quaternary structure, component of the Sec protein translocase complex. Heterotrimer consisting of SecY (alpha), SecG (beta) and SecE (gamma) subunits. The heterotrimers can form oligomers, although 1 heterotrimer is thought to be able to translocate proteins. Interacts with the ribosome. May interact with SecDF, and other proteins may be involved.

It localises to the cell membrane. Its function is as follows. Essential subunit of the Sec protein translocation channel SecYEG. Clamps together the 2 halves of SecY. May contact the channel plug during translocation. The protein is Protein translocase subunit SecE of Thermococcus onnurineus (strain NA1).